Here is a 315-residue protein sequence, read N- to C-terminus: Acetyl-coenzyme A carboxylase carboxyl transferase subunit alpha (315 aa).

The region spanning 36–289 (LSKKRLELME…RKAVAAELKI (254 aa)) is the CoA carboxyltransferase C-terminal domain.

The protein belongs to the AccA family. Acetyl-CoA carboxylase is a heterohexamer composed of biotin carboxyl carrier protein (AccB), biotin carboxylase (AccC) and two subunits each of ACCase subunit alpha (AccA) and ACCase subunit beta (AccD).

The protein localises to the cytoplasm. The enzyme catalyses N(6)-carboxybiotinyl-L-lysyl-[protein] + acetyl-CoA = N(6)-biotinyl-L-lysyl-[protein] + malonyl-CoA. The protein operates within lipid metabolism; malonyl-CoA biosynthesis; malonyl-CoA from acetyl-CoA: step 1/1. In terms of biological role, component of the acetyl coenzyme A carboxylase (ACC) complex. First, biotin carboxylase catalyzes the carboxylation of biotin on its carrier protein (BCCP) and then the CO(2) group is transferred by the carboxyltransferase to acetyl-CoA to form malonyl-CoA. This Francisella tularensis subsp. holarctica (strain FTNF002-00 / FTA) protein is Acetyl-coenzyme A carboxylase carboxyl transferase subunit alpha.